A 187-amino-acid polypeptide reads, in one-letter code: Accessory gene regulator protein B (187 aa).

5 consecutive transmembrane segments (helical) span residues 49 to 69, 82 to 102, 107 to 127, 143 to 163, and 164 to 184; these read IAYI…FYLI, FWCY…VLHF, TLMM…APAA, YFSI…KEPY, and TQFI…IYYS.

This sequence belongs to the AgrB family.

Its subcellular location is the cell membrane. Its function is as follows. Essential for the production of a quorum sensing system signal molecule, the autoinducing peptide (AIP). This quorum sensing system is responsible for the regulation of the expression of virulence factor genes. Involved in the proteolytic processing of AgrD, the precursor of AIP. In Staphylococcus aureus (strain MW2), this protein is Accessory gene regulator protein B.